A 137-amino-acid polypeptide reads, in one-letter code: Allergen Ste b 1 (137 aa).

The first 18 residues, 1 to 18 (ALFAAAGLAAAAPFETRQ), serve as a signal peptide directing secretion. Residues 28–137 (QGDYVWKISE…PKDVICQGAS (110 aa)) enclose the AA1-like domain. 2 disulfide bridges follow: C67/C82 and C121/C133.

This sequence belongs to the ALTA1 family. In terms of assembly, homodimer; disulfide-linked.

The protein resides in the secreted. The chain is Allergen Ste b 1 (alta1) from Stemphylium botryosum (Black stalk rot fungus).